A 127-amino-acid polypeptide reads, in one-letter code: Apolipoprotein C-IV (127 aa).

An N-terminal signal peptide occupies residues 1 to 27; sequence MSLLRNRLQDLPALCLCVLVLACIGAC.

The protein belongs to the apolipoprotein C4 family.

The protein resides in the secreted. Functionally, may participate in lipoprotein metabolism. The chain is Apolipoprotein C-IV (APOC4) from Papio anubis (Olive baboon).